The sequence spans 346 residues: uncharacterized protein (346 aa).

The helical transmembrane segment at 7–27 (AMVILLIICGTYVLFIQYGSV) threads the bilayer. Residues 29-48 (EKKSNDSEPQVSNEEAQSGK) form a disordered region. Residues 35–44 (SEPQVSNEEA) show a composition bias toward polar residues. The 112-residue stretch at 231 to 342 (LDLTNVIRVK…VDRKYYTQNF (112 aa)) folds into the SCP domain.

The protein resides in the cell membrane. This is an uncharacterized protein from Bacillus subtilis (strain 168).